The following is a 528-amino-acid chain: Linear element-associated protein hop1 (528 aa).

Residues 11 to 212 enclose the HORMA domain; the sequence is TKSDFTLKNL…RGEFKDIVSF (202 aa). The PHD-type zinc-finger motif lies at 334 to 385; the sequence is LLNCECGDSTEDSEMFQCERCDGWVHCACYGFESDSDPRQPNQLLCYTCLLV. Zn(2+) is bound by residues Cys337, Cys339, Cys351, Cys354, His359, Cys362, Cys379, and Cys382. A disordered region spans residues 507–528; it reads RPKKVSKTSNTKETDTMKPLRI. The span at 516 to 528 shows a compositional bias: basic and acidic residues; sequence NTKETDTMKPLRI.

As to quaternary structure, interacts (via N-terminus) with rec10; the interaction is direct. Interacts (via C-terminus) with rec15 (via C-terminus); the interaction is direct.

The protein localises to the nucleus. It localises to the chromosome. Facilitates initiation of meiotic recombination and DNA double-strand break (DSB) formation at DSB hotspot sites by enhancing the interaction between rec10 and rec15. The protein is Linear element-associated protein hop1 of Schizosaccharomyces pombe (strain 972 / ATCC 24843) (Fission yeast).